The chain runs to 256 residues: Imidazole glycerol phosphate synthase subunit HisF (256 aa).

Catalysis depends on residues D12 and D131.

This sequence belongs to the HisA/HisF family. Heterodimer of HisH and HisF.

The protein localises to the cytoplasm. The enzyme catalyses 5-[(5-phospho-1-deoxy-D-ribulos-1-ylimino)methylamino]-1-(5-phospho-beta-D-ribosyl)imidazole-4-carboxamide + L-glutamine = D-erythro-1-(imidazol-4-yl)glycerol 3-phosphate + 5-amino-1-(5-phospho-beta-D-ribosyl)imidazole-4-carboxamide + L-glutamate + H(+). The protein operates within amino-acid biosynthesis; L-histidine biosynthesis; L-histidine from 5-phospho-alpha-D-ribose 1-diphosphate: step 5/9. Functionally, IGPS catalyzes the conversion of PRFAR and glutamine to IGP, AICAR and glutamate. The HisF subunit catalyzes the cyclization activity that produces IGP and AICAR from PRFAR using the ammonia provided by the HisH subunit. The polypeptide is Imidazole glycerol phosphate synthase subunit HisF (Renibacterium salmoninarum (strain ATCC 33209 / DSM 20767 / JCM 11484 / NBRC 15589 / NCIMB 2235)).